We begin with the raw amino-acid sequence, 397 residues long: MASEGITEIDSGLIETNYDNVVYTFDDLNLKPNIVRGIFGYGYESPSAIQQRAILPITEGRDVLAQAQSGTGKTATFTISALQRIDENEKSTQALILAPTRELALQIQNVITHIGLYLNVTVHASIGGTSMKDDIEAFKSGVQIVVGTPGRVFDMIERRFFKTDKVKMFILDEADEMLSSGFKEQIYNIFRLLPETTQVVLLSATMPQDVLEVTTKFMNNPVRILVKKDELTLEGIKQFYINVEQEDYKFDCLCDLYDSISVTQAVIFCNTRSKVEFLTTKLKGENFTVSAIHADLPQADRDTIMNEFRSGSSRILISTDLLARGIDVQQVSLVINYDLPANKENYIHRIGRGGRFGRKGVAINFVTDQDVGMMREIEKFYSTQIEEMPADIGALFN.

Positions 23-51 match the Q motif motif; it reads YTFDDLNLKPNIVRGIFGYGYESPSAIQQ. A Helicase ATP-binding domain is found at 54-224; it reads ILPITEGRDV…TKFMNNPVRI (171 aa). 67–74 is an ATP binding site; the sequence is AQSGTGKT. A DEAD box motif is present at residues 172-175; that stretch reads DEAD. One can recognise a Helicase C-terminal domain in the interval 235-396; the sequence is GIKQFYINVE…EMPADIGALF (162 aa).

This sequence belongs to the DEAD box helicase family. eIF4A subfamily. Component of the eIF4F complex, which composition varies with external and internal environmental conditions. It is composed of at least eIF4A, eIF4E and eIF4G.

The protein localises to the cytoplasm. It carries out the reaction ATP + H2O = ADP + phosphate + H(+). Its function is as follows. ATP-dependent RNA helicase which is a subunit of the eIF4F complex involved in cap recognition and is required for mRNA binding to ribosome. In the current model of translation initiation, eIF4A unwinds RNA secondary structures in the 5'-UTR of mRNAs which is necessary to allow efficient binding of the small ribosomal subunit, and subsequent scanning for the initiator codon. The protein is ATP-dependent RNA helicase eIF4A (TIF1) of Debaryomyces hansenii (strain ATCC 36239 / CBS 767 / BCRC 21394 / JCM 1990 / NBRC 0083 / IGC 2968) (Yeast).